Here is an 88-residue protein sequence, read N- to C-terminus: Elongation factor 1-beta (88 aa).

This sequence belongs to the EF-1-beta/EF-1-delta family.

Its function is as follows. Promotes the exchange of GDP for GTP in EF-1-alpha/GDP, thus allowing the regeneration of EF-1-alpha/GTP that could then be used to form the ternary complex EF-1-alpha/GTP/AAtRNA. This is Elongation factor 1-beta from Halorubrum lacusprofundi (strain ATCC 49239 / DSM 5036 / JCM 8891 / ACAM 34).